We begin with the raw amino-acid sequence, 356 residues long: Protein-glutamate methylesterase/protein-glutamine glutaminase 4 (356 aa).

One can recognise a Response regulatory domain in the interval 15-132; it reads RVLVVDDSAV…SVGEMTADLV (118 aa). At D66 the chain carries 4-aspartylphosphate. Residues 162-348 enclose the CheB-type methylesterase domain; that stretch reads ARTTLQVVAI…PLDRIAPEIL (187 aa). Active-site residues include S174, H200, and D296.

It belongs to the CheB family. Phosphorylated by CheA. Phosphorylation of the N-terminal regulatory domain activates the methylesterase activity.

The protein localises to the cytoplasm. The catalysed reaction is [protein]-L-glutamate 5-O-methyl ester + H2O = L-glutamyl-[protein] + methanol + H(+). It carries out the reaction L-glutaminyl-[protein] + H2O = L-glutamyl-[protein] + NH4(+). In terms of biological role, involved in chemotaxis. Part of a chemotaxis signal transduction system that modulates chemotaxis in response to various stimuli. Catalyzes the demethylation of specific methylglutamate residues introduced into the chemoreceptors (methyl-accepting chemotaxis proteins or MCP) by CheR. Also mediates the irreversible deamidation of specific glutamine residues to glutamic acid. The sequence is that of Protein-glutamate methylesterase/protein-glutamine glutaminase 4 from Anaeromyxobacter dehalogenans (strain 2CP-C).